We begin with the raw amino-acid sequence, 232 residues long: DNA repair and recombination protein RadB (232 aa).

The protein belongs to the eukaryotic RecA-like protein family. RadB subfamily.

Functionally, involved in DNA repair and in homologous recombination. May regulate the cleavage reactions of the branch-structured DNA. Has a very weak ATPase activity that is not stimulated by DNA. Binds DNA but does not promote DNA strands exchange. In Methanosphaera stadtmanae (strain ATCC 43021 / DSM 3091 / JCM 11832 / MCB-3), this protein is DNA repair and recombination protein RadB.